Here is a 644-residue protein sequence, read N- to C-terminus: Threonine--tRNA ligase (644 aa).

The 61-residue stretch at 1–61 (MNVTIEGQVF…ADTTTIEPVF (61 aa)) folds into the TGS domain. The segment at 241 to 532 (DHRKLGQQLD…LTEHFAGAFP (292 aa)) is catalytic. Zn(2+) contacts are provided by Cys333, His384, and His509.

This sequence belongs to the class-II aminoacyl-tRNA synthetase family. In terms of assembly, homodimer. It depends on Zn(2+) as a cofactor.

The protein localises to the cytoplasm. It carries out the reaction tRNA(Thr) + L-threonine + ATP = L-threonyl-tRNA(Thr) + AMP + diphosphate + H(+). Its function is as follows. Catalyzes the attachment of threonine to tRNA(Thr) in a two-step reaction: L-threonine is first activated by ATP to form Thr-AMP and then transferred to the acceptor end of tRNA(Thr). Also edits incorrectly charged L-seryl-tRNA(Thr). This Nitratidesulfovibrio vulgaris (strain DSM 19637 / Miyazaki F) (Desulfovibrio vulgaris) protein is Threonine--tRNA ligase.